The chain runs to 272 residues: 3-keto-5-aminohexanoate cleavage enzyme (272 aa).

Residue Glu15 coordinates (5S)-5-amino-3-oxohexanoate. Zn(2+)-binding residues include His47 and His49. The (5S)-5-amino-3-oxohexanoate site is built by Ser83, Gly86, and Thr107. Glu226 lines the Zn(2+) pocket.

This sequence belongs to the BKACE family. Kce subfamily. In terms of assembly, homotetramer. The cofactor is Zn(2+).

It catalyses the reaction (5S)-5-amino-3-oxohexanoate + acetyl-CoA = (3S)-3-aminobutanoyl-CoA + acetoacetate. Its pathway is amino-acid degradation; L-lysine degradation via acetate pathway. Its activity is regulated as follows. 3-fold increase in activity by addition of 10 mM 2-mercaptoethanol. Addition of CoCl(2) and to a lesser extent MnCl(2) increases the activity but not MgCl(2). Inhibited by phosphate buffer but not by 5,5'-dithio-2-nitrobenzoic acid. Functionally, involved in the anaerobic fermentation of lysine. Catalyzes the reversible reaction between 3-keto-5-aminohexanoate (KAH) and acetyl-CoA to form 3-aminobutyryl-CoA and acetoacetate. The reaction involves the deprotonation of KAH, the nucleophilic addition onto acetyl-CoA and the intramolecular transfer of the CoA moiety. It can also use beta-alanyl-CoA as substrate. The sequence is that of 3-keto-5-aminohexanoate cleavage enzyme from Fusobacterium nucleatum subsp. nucleatum (strain ATCC 25586 / DSM 15643 / BCRC 10681 / CIP 101130 / JCM 8532 / KCTC 2640 / LMG 13131 / VPI 4355).